The chain runs to 155 residues: SsrA-binding protein (155 aa).

This sequence belongs to the SmpB family.

The protein resides in the cytoplasm. In terms of biological role, required for rescue of stalled ribosomes mediated by trans-translation. Binds to transfer-messenger RNA (tmRNA), required for stable association of tmRNA with ribosomes. tmRNA and SmpB together mimic tRNA shape, replacing the anticodon stem-loop with SmpB. tmRNA is encoded by the ssrA gene; the 2 termini fold to resemble tRNA(Ala) and it encodes a 'tag peptide', a short internal open reading frame. During trans-translation Ala-aminoacylated tmRNA acts like a tRNA, entering the A-site of stalled ribosomes, displacing the stalled mRNA. The ribosome then switches to translate the ORF on the tmRNA; the nascent peptide is terminated with the 'tag peptide' encoded by the tmRNA and targeted for degradation. The ribosome is freed to recommence translation, which seems to be the essential function of trans-translation. This chain is SsrA-binding protein, found in Streptococcus equi subsp. zooepidemicus (strain MGCS10565).